Consider the following 499-residue polypeptide: Trichoplein keratin filament-binding protein (499 aa).

A coiled-coil region spans residues 12 to 38 (SRVRTLEQQLVRQREQEARLRRQWEQH). Disordered stretches follow at residues 46 to 78 (DVRS…EEKQ) and 169 to 209 (VQQQ…EEEN). Positions 50-67 (SKQAQWSSRQSFHRSMSA) are enriched in polar residues. Basic and acidic residues-rich tracts occupy residues 69-78 (QRDRMREEKQ) and 172-209 (QEKK…EEEN). Coiled-coil stretches lie at residues 71–133 (DRMR…ERRK), 168–306 (QVQQ…ALLE), and 359–484 (WEKR…MIRQ). Residues 74-499 (REEKQRKLEE…IHSRPRSAWT (426 aa)) form an interaction with keratin proteins region. The tract at residues 260–426 (KMMEESRRKT…RLTLRLEKEQ (167 aa)) is trichohyalin/plectin homology domain.

The protein belongs to the TCHP family.

It localises to the cytoplasm. The protein localises to the cytoskeleton. The protein resides in the microtubule organizing center. Its subcellular location is the centrosome. May act as a 'capping' or 'branching' protein for keratin filaments in the cell periphery. May regulate K8/K18 filament and desmosome organization mainly at the apical or peripheral regions of simple epithelial cells. The chain is Trichoplein keratin filament-binding protein from Danio rerio (Zebrafish).